The following is a 194-amino-acid chain: NADH-quinone oxidoreductase subunit B 1 (194 aa).

Residues 1 to 12 (MGVTPVSNQPLV) show a composition bias toward polar residues. The disordered stretch occupies residues 1 to 23 (MGVTPVSNQPLVAQQPKGIIDPS). Cysteine 73, cysteine 74, cysteine 138, and cysteine 168 together coordinate [4Fe-4S] cluster.

This sequence belongs to the complex I 20 kDa subunit family. NDH-1 is composed of 14 different subunits. Subunits NuoB, C, D, E, F, and G constitute the peripheral sector of the complex. Requires [4Fe-4S] cluster as cofactor.

The protein localises to the cell inner membrane. The catalysed reaction is a quinone + NADH + 5 H(+)(in) = a quinol + NAD(+) + 4 H(+)(out). Its function is as follows. NDH-1 shuttles electrons from NADH, via FMN and iron-sulfur (Fe-S) centers, to quinones in the respiratory chain. The immediate electron acceptor for the enzyme in this species is believed to be ubiquinone. Couples the redox reaction to proton translocation (for every two electrons transferred, four hydrogen ions are translocated across the cytoplasmic membrane), and thus conserves the redox energy in a proton gradient. The protein is NADH-quinone oxidoreductase subunit B 1 of Rhizobium etli (strain ATCC 51251 / DSM 11541 / JCM 21823 / NBRC 15573 / CFN 42).